We begin with the raw amino-acid sequence, 127 residues long: Profilin (127 aa).

The protein belongs to the profilin family. In terms of assembly, occurs in many kinds of cells as a complex with monomeric actin in a 1:1 ratio.

It localises to the cytoplasm. It is found in the cytoskeleton. Its function is as follows. Binds to actin and affects the structure of the cytoskeleton. At high concentrations, profilin prevents the polymerization of actin, whereas it enhances it at low concentrations. By binding to PIP2, it inhibits the formation of IP3 and DG. In S.pombe, it is essential for cytokinesis. The chain is Profilin (cdc3) from Schizosaccharomyces pombe (strain 972 / ATCC 24843) (Fission yeast).